A 331-amino-acid polypeptide reads, in one-letter code: D-galactose/methyl-galactoside binding periplasmic protein MglB (331 aa).

Positions 1–24 (MKKTAVLSTVAFAIALGSASASFA) are cleaved as a signal peptide. 2 residues coordinate beta-D-galactose: Asp-38 and Asn-115. Residues Asp-38 and Asn-115 each coordinate beta-D-glucose. Residues Asp-158, Asn-160, Asp-162, Lys-164, and Gln-166 each contribute to the Ca(2+) site. Residues His-176, Asp-178, and Arg-182 each contribute to the beta-D-galactose site. Residues His-176, Asp-178, and Arg-182 each contribute to the beta-D-glucose site. Glu-229 contacts Ca(2+). Residues Asn-235, Asp-259, and Asn-279 each contribute to the beta-D-galactose site. 3 residues coordinate beta-D-glucose: Asn-235, Asp-259, and Asn-279.

It belongs to the bacterial solute-binding protein 2 family. In terms of assembly, the ABC transporter complex is composed of one ATP-binding protein (MglA), two transmembrane proteins (MglC) and a solute-binding protein (MglB).

It is found in the periplasm. Functionally, part of the ABC transporter complex MglABC involved in galactose/methyl galactoside import. In Haemophilus influenzae (strain ATCC 51907 / DSM 11121 / KW20 / Rd), this protein is D-galactose/methyl-galactoside binding periplasmic protein MglB (mglB).